The following is an 828-amino-acid chain: Zinc finger protein 438 (828 aa).

3 disordered regions span residues 1 to 29 (MQNS…KGLQ), 143 to 173 (KSGC…LYKP), and 193 to 231 (ALTN…PAKQ). Polar residues-rich tracts occupy residues 16–29 (NIPS…KGLQ) and 150–159 (PAQTQMCPQM). 3 C2H2-type zinc fingers span residues 507–529 (HRCH…MNTH), 535–557 (YSCR…MKLH), and 567–590 (MCCE…KEVH). The tract at residues 680–721 (EGTFPGSKGTQEELVQHASPDWKRHPERGKPEKVHSSSEESH) is disordered. The segment covering 689–721 (TQEELVQHASPDWKRHPERGKPEKVHSSSEESH) has biased composition (basic and acidic residues). Residues 776 to 799 (FNCLLCAEMLGRKEDLLHHWKHQH) form a C2H2-type 4 zinc finger.

This sequence belongs to the krueppel C2H2-type zinc-finger protein family. Ubiquitous.

Its subcellular location is the nucleus. Functionally, isoform 1 acts as a transcriptional repressor. The polypeptide is Zinc finger protein 438 (ZNF438) (Homo sapiens (Human)).